A 167-amino-acid chain; its full sequence is Small ribosomal subunit protein uS5 (167 aa).

One can recognise an S5 DRBM domain in the interval 12 to 75 (LQEKLIAVNR…EKARRNMVTV (64 aa)).

The protein belongs to the universal ribosomal protein uS5 family. Part of the 30S ribosomal subunit. Contacts proteins S4 and S8.

Functionally, with S4 and S12 plays an important role in translational accuracy. In terms of biological role, located at the back of the 30S subunit body where it stabilizes the conformation of the head with respect to the body. The polypeptide is Small ribosomal subunit protein uS5 (Shewanella sp. (strain W3-18-1)).